The primary structure comprises 598 residues: MFKISRKNYSDLYGITTGDSVRLGDTNLWVKVEKDLTTYGEESVFGGGKTLREGMGMNSTMKLDDKLGNAEVMDLVITNALILDYTGIYKADIGIKNGKIASIGKSGNPHLTDGVDMVVGISTEVSAGEGKIYTAGGLDTHVHWLEPEIVPVALDGGITTVIAGGTGMNDGTKATTVSPGKFWVKSALQAADGLPINAGFLAKGQGMEDPIFEQIVAGACGLKIHEDWGATGNAIDLALTVAEKTDVAVAIHTDTLNEAGFVEHTIAAMKGRTIHAYHTEGAGGGHAPDILESVKYAHILPASTNPTIPYTVNTIAEHLDMLMVCHHLNPKVPEDVAFADSRIRSQTIAAEDLLHDMGAISIMSSDTLAMGRIGEVVTRSWQMAHKMKAQFGALKGDSEFNDNNRVKRYVAKYTINPAIAHGIDSYVGSIEVGKLADIVAWEPKFFGAKPYYVVKMGVIARCVAGDPNASIPTCEPVIMRDQFGTYGRSLTSTSVSFVSKIGLENGIKEEYKLEKELLPVKNCRSINKKSMKWNSATPNLEVDPQTFDAAVDYNDLENWLEQPAAELAKKLKKTANGKYVLDAEPLTEAPLAQRYFLF.

The 463-residue stretch at 136-598 (GGLDTHVHWL…APLAQRYFLF (463 aa)) folds into the Urease domain. Residues histidine 141, histidine 143, and lysine 223 each contribute to the Ni(2+) site. Residue lysine 223 is modified to N6-carboxylysine. Histidine 225 is a substrate binding site. 2 residues coordinate Ni(2+): histidine 252 and histidine 278. Histidine 326 (proton donor) is an active-site residue. Ni(2+) is bound at residue aspartate 366.

The protein belongs to the metallo-dependent hydrolases superfamily. Urease alpha subunit family. In terms of assembly, heterotrimer of UreA (gamma), UreB (beta) and UreC (alpha) subunits. Three heterotrimers associate to form the active enzyme. The cofactor is Ni cation. Post-translationally, carboxylation allows a single lysine to coordinate two nickel ions.

Its subcellular location is the cytoplasm. It carries out the reaction urea + 2 H2O + H(+) = hydrogencarbonate + 2 NH4(+). It functions in the pathway nitrogen metabolism; urea degradation; CO(2) and NH(3) from urea (urease route): step 1/1. The sequence is that of Urease subunit alpha from Ureaplasma urealyticum serovar 10 (strain ATCC 33699 / Western).